Consider the following 304-residue polypeptide: Porphobilinogen deaminase (304 aa).

Cysteine 240 bears the S-(dipyrrolylmethanemethyl)cysteine mark.

It belongs to the HMBS family. As to quaternary structure, monomer. Dipyrromethane is required as a cofactor.

The catalysed reaction is 4 porphobilinogen + H2O = hydroxymethylbilane + 4 NH4(+). Its pathway is porphyrin-containing compound metabolism; protoporphyrin-IX biosynthesis; coproporphyrinogen-III from 5-aminolevulinate: step 2/4. Its function is as follows. Tetrapolymerization of the monopyrrole PBG into the hydroxymethylbilane pre-uroporphyrinogen in several discrete steps. This is Porphobilinogen deaminase from Xanthomonas euvesicatoria pv. vesicatoria (strain 85-10) (Xanthomonas campestris pv. vesicatoria).